A 43-amino-acid chain; its full sequence is Lanthionine-containing peptide SapB (43 aa).

The first 21 residues, 1 to 21 (MALLDLQAMDTPAEDSFGELA), serve as a signal peptide directing secretion. 2 consecutive cross-links (lanthionine (Ser-Cys)) follow at residues 24–31 (SQVSLLVC) and 34–41 (SSLSVVLC). Residues S27 and S37 each carry the 2,3-didehydroalanine (Ser) modification.

It belongs to the lanthionine-containing morphogen protein family. Maturation involves the enzymatic conversion of Ser into dehydrated AA and the formation of thioether bonds with cysteine. This is followed by membrane translocation and cleavage of the modified precursor.

Functionally, lanthionine-containing peptide devoid of antibiotic properties, involved in the formation of aerial mycelium. Suggested to self-assemble at air-water interfaces, thus providing a film of surfactant through which nascent aerial hyphae can emerge. The aerial hyphae differentiate further into spores. This is Lanthionine-containing peptide SapB (ramS) from Streptomyces griseus subsp. griseus (strain JCM 4626 / CBS 651.72 / NBRC 13350 / KCC S-0626 / ISP 5235).